Consider the following 305-residue polypeptide: MAQVKRIRRNVSGIILLDKPLGFTSNAALQKVRWLLNAEKAGHTGSLDPLATGVLPLCFGEATKFSQYLLDSDKSYETLAQLGKTTTTADSEGEVLLTRPVTVGRDDIEAALPHFRGQISQIPPMYSALKRDGQPLYKLARAGEVVEREPRSVTIARLELLACEGDTARLSVDCSKGTYIRTLVEDIGEKLGCGAYVAELRRTQAGPFTLAQTVTLEELEQVHADGGNEAVDRFLMPSDSGLLDWPLLKFSEHSSFYWLHGQPVRAPDAPKFGMVRVQDHEGRFIGIGEVAEDGRIAPRRLIRSE.

Aspartate 48 acts as the Nucleophile in catalysis.

The protein belongs to the pseudouridine synthase TruB family. Type 1 subfamily.

The catalysed reaction is uridine(55) in tRNA = pseudouridine(55) in tRNA. Its function is as follows. Responsible for synthesis of pseudouridine from uracil-55 in the psi GC loop of transfer RNAs. This Pseudomonas syringae pv. syringae (strain B728a) protein is tRNA pseudouridine synthase B.